Here is a 434-residue protein sequence, read N- to C-terminus: Histidinol dehydrogenase (434 aa).

NAD(+)-binding residues include Y130, Q188, and N211. Residues S237, Q259, and H262 each contribute to the substrate site. Residues Q259 and H262 each coordinate Zn(2+). Catalysis depends on proton acceptor residues E326 and H327. Residues H327, D360, E414, and H419 each coordinate substrate. D360 provides a ligand contact to Zn(2+). H419 serves as a coordination point for Zn(2+).

It belongs to the histidinol dehydrogenase family. In terms of assembly, homodimer. Zn(2+) serves as cofactor.

The catalysed reaction is L-histidinol + 2 NAD(+) + H2O = L-histidine + 2 NADH + 3 H(+). The protein operates within amino-acid biosynthesis; L-histidine biosynthesis; L-histidine from 5-phospho-alpha-D-ribose 1-diphosphate: step 9/9. Catalyzes the sequential NAD-dependent oxidations of L-histidinol to L-histidinaldehyde and then to L-histidine. In Shigella flexneri, this protein is Histidinol dehydrogenase.